The following is a 352-amino-acid chain: tRNA pseudouridine synthase D (352 aa).

The active-site Nucleophile is Asp81. Residues 157–303 (GVPNYFGLQR…MAHERRILRL (147 aa)) form the TRUD domain.

This sequence belongs to the pseudouridine synthase TruD family.

The catalysed reaction is uridine(13) in tRNA = pseudouridine(13) in tRNA. Functionally, responsible for synthesis of pseudouridine from uracil-13 in transfer RNAs. In Ectopseudomonas mendocina (strain ymp) (Pseudomonas mendocina), this protein is tRNA pseudouridine synthase D.